Here is a 159-residue protein sequence, read N- to C-terminus: 3-hydroxyacyl-[acyl-carrier-protein] dehydratase FabZ (159 aa).

H58 is a catalytic residue.

The protein belongs to the thioester dehydratase family. FabZ subfamily.

It localises to the cytoplasm. The catalysed reaction is a (3R)-hydroxyacyl-[ACP] = a (2E)-enoyl-[ACP] + H2O. Its function is as follows. Involved in unsaturated fatty acids biosynthesis. Catalyzes the dehydration of short chain beta-hydroxyacyl-ACPs and long chain saturated and unsaturated beta-hydroxyacyl-ACPs. This chain is 3-hydroxyacyl-[acyl-carrier-protein] dehydratase FabZ, found in Helicobacter pylori (strain ATCC 700392 / 26695) (Campylobacter pylori).